The following is a 153-amino-acid chain: ORM1-like protein 3 (153 aa).

Residues 1–17 (MNVGTAHSEVNPNTRVM) are important for ceramide level-sensing. Over 1 to 21 (MNVGTAHSEVNPNTRVMNSRG) the chain is Cytoplasmic. 2 helical membrane-spanning segments follow: residues 22–44 (IWLSYVLAIGLLHIVLLSIPFVS) and 45–63 (VPVVWTLTNLIHNMGMYIF). The Cytoplasmic portion of the chain corresponds to 64–100 (LHTVKGTPFETPDQGKARLLTHWEQMDYGVQFTASRK). Residues 101–117 (FLTITPIVLYFLTSFYT) form a helical membrane-spanning segment. The Lumenal segment spans residues 118–121 (KYDQ). The helical transmembrane segment at 122–139 (IHFVLNTVSLMSVLIPKL) threads the bilayer. Position 137 is a hydroxyproline (proline 137). At 140 to 153 (PQLHGVRIFGINKY) the chain is on the cytoplasmic side.

Belongs to the ORM family. In terms of assembly, ceramide-sensitive subunit of the serine palmitoyltransferase (SPT) complex, which is also composed of SPTLC1, SPTLC2/3 and SPTSSA/B. Post-translationally, when hydroxylated at Pro-137, ubiquitinated via 'Lys-48'-linkage, leading to proteasomal degradation. In endothelial cells, ORMDL3 proteasomal degradation is controlled by the sphingosine 1-phosphate receptor signaling pathway. As to expression, widely expressed. Expressed in adult and fetal heart, brain, lung, liver, skeletal muscle and kidney. Expressed in adult pancreas and placenta and in fetal spleen and thymus.

Its subcellular location is the endoplasmic reticulum membrane. Functionally, plays an essential role in the homeostatic regulation of sphingolipid de novo biosynthesis by modulating the activity of the serine palmitoyltransferase (SPT) in response to ceramide levels. When complexed to SPT, the binding of ceramides to its N-terminus stabilizes a conformation that block SPT substrate entry, hence preventing SPT catalytic activity. Through this mechanism, maintains ceramide levels at sufficient concentrations for the production of complex sphingolipids, but which prevents the accumulation of ceramides to levels that trigger apoptosis. This is ORM1-like protein 3 (ORMDL3) from Homo sapiens (Human).